Consider the following 899-residue polypeptide: Translation initiation factor IF-2 (899 aa).

Disordered stretches follow at residues 116–135 (AKARAEQQAREAAEQKARLQ), 170–189 (RGGGTVKPAPKPAETLEQKK), and 262–306 (DREI…ANKH). A tr-type G domain is found at 399 to 568 (TRPPVVTIMG…LIQSELMELK (170 aa)). The G1 stretch occupies residues 408–415 (GHVDHGKT). Residue 408–415 (GHVDHGKT) coordinates GTP. The G2 stretch occupies residues 433 to 437 (GITQH). The interval 454–457 (DTPG) is G3. Residues 454–458 (DTPGH) and 508–511 (NKMD) contribute to the GTP site. Residues 508-511 (NKMD) form a G4 region. Residues 544 to 546 (SAH) are G5.

Belongs to the TRAFAC class translation factor GTPase superfamily. Classic translation factor GTPase family. IF-2 subfamily.

The protein localises to the cytoplasm. Functionally, one of the essential components for the initiation of protein synthesis. Protects formylmethionyl-tRNA from spontaneous hydrolysis and promotes its binding to the 30S ribosomal subunits. Also involved in the hydrolysis of GTP during the formation of the 70S ribosomal complex. The chain is Translation initiation factor IF-2 from Acinetobacter baumannii (strain AB307-0294).